The primary structure comprises 158 residues: Endoribonuclease YbeY (158 aa).

His-117, His-121, and His-127 together coordinate Zn(2+).

Belongs to the endoribonuclease YbeY family. The cofactor is Zn(2+).

It is found in the cytoplasm. In terms of biological role, single strand-specific metallo-endoribonuclease involved in late-stage 70S ribosome quality control and in maturation of the 3' terminus of the 16S rRNA. The protein is Endoribonuclease YbeY of Psychromonas ingrahamii (strain DSM 17664 / CCUG 51855 / 37).